The following is a 485-amino-acid chain: Cysteine--tRNA ligase (485 aa).

Residue cysteine 27 participates in Zn(2+) binding. Residues 29–39 carry the 'HIGH' region motif; sequence ITAYDLCHIGH. Zn(2+) contacts are provided by cysteine 208, histidine 233, and glutamate 237. The 'KMSKS' region motif lies at 265 to 269; that stretch reads KMSKS. Lysine 268 lines the ATP pocket.

This sequence belongs to the class-I aminoacyl-tRNA synthetase family. In terms of assembly, monomer. Zn(2+) serves as cofactor.

It localises to the cytoplasm. The catalysed reaction is tRNA(Cys) + L-cysteine + ATP = L-cysteinyl-tRNA(Cys) + AMP + diphosphate. The protein is Cysteine--tRNA ligase of Solidesulfovibrio magneticus (strain ATCC 700980 / DSM 13731 / RS-1) (Desulfovibrio magneticus).